We begin with the raw amino-acid sequence, 316 residues long: Pantothenate kinase (316 aa).

95-102 (GSVAVGKS) contacts ATP.

It belongs to the prokaryotic pantothenate kinase family.

It localises to the cytoplasm. It catalyses the reaction (R)-pantothenate + ATP = (R)-4'-phosphopantothenate + ADP + H(+). The protein operates within cofactor biosynthesis; coenzyme A biosynthesis; CoA from (R)-pantothenate: step 1/5. This Pectobacterium carotovorum subsp. carotovorum (strain PC1) protein is Pantothenate kinase.